Reading from the N-terminus, the 267-residue chain is Methylglyoxal reductase DkgB (267 aa).

Tyr-39 (proton donor) is an active-site residue. Position 97 (His-97) interacts with substrate. 179–231 serves as a coordination point for NADP(+); it reads MTLAYGKALKDEVIARIAAKHNATPAQVILAWAMGEGYSVIPSSTKRENLESN.

This sequence belongs to the aldo/keto reductase family. In terms of assembly, monomer.

It localises to the cytoplasm. It catalyses the reaction hydroxyacetone + NADP(+) = methylglyoxal + NADPH + H(+). Its function is as follows. Aldo-keto reductase that significantly contributes to cellular methylglyoxal detoxification by catalyzing the NADPH-dependent conversion of methylglyoxal to acetol. The chain is Methylglyoxal reductase DkgB from Escherichia coli O157:H7.